Consider the following 199-residue polypeptide: Desiccation stress protein DSP-22, chloroplastic (199 aa).

The transit peptide at 1-52 (MASSTCYATIPAMSCRGQSTITRFGPNNLFLGKQSYELPLMRRNAKFTVRSM) directs the protein to the chloroplast. Basic and acidic residues predominate over residues 53–62 (REDNEKEEQQ). The interval 53-82 (REDNEKEEQQQQKQQQTHDGGPDLTPNRTE) is disordered. The next 2 helical transmembrane spans lie at 130–152 (FNGGVMWFLLTSAVLVLATLIPI) and 172–191 (IWNGRFAMIGLVALAFTEYV).

Belongs to the ELIP/psbS family. As to expression, preferentially localized in the chloroplast-rich palisade parenchyma cells, in extracts of desiccated leaves, in seeds, but not in roots or untreated leaves.

The protein localises to the plastid. It is found in the chloroplast thylakoid membrane. Functionally, possibly exerts a protective role during water loss. The protein is Desiccation stress protein DSP-22, chloroplastic (DSP-22) of Craterostigma plantagineum (Blue gem).